Consider the following 187-residue polypeptide: Putative manganese efflux pump MntP (187 aa).

6 helical membrane-spanning segments follow: residues 3–23 (LSATLLLAFGMSMDAFAASIG), 41–61 (LIFGVIEAITPLVGWLLGLLA), 62–82 (TQFVLTWNHWIAFVLLVFLGG), 106–128 (LLVTTAFATSLDAMAVGVGLAFL), 142–162 (ATLIMSTLGMMVGRFIGPLLG), and 167–187 (ILGGVVLIGIGCQILWSHFAG).

The protein belongs to the MntP (TC 9.B.29) family.

Its subcellular location is the cell inner membrane. Functionally, probably functions as a manganese efflux pump. This chain is Putative manganese efflux pump MntP, found in Cronobacter sakazakii (strain ATCC BAA-894) (Enterobacter sakazakii).